A 119-amino-acid chain; its full sequence is Early E3 13.3 kDa protein (119 aa).

The sequence is that of Early E3 13.3 kDa protein from Canine adenovirus serotype 1 (strain Utrecht) (CAdV-1).